A 388-amino-acid chain; its full sequence is Meiotic driver wtf13 (388 aa).

Over residues 1-29 (MKNKDYPLRSSMDELSTKNDNEIDLEKGP) the composition is skewed to basic and acidic residues. The segment at 1-39 (MKNKDYPLRSSMDELSTKNDNEIDLEKGPLPEYNSEDGS) is disordered. 9 consecutive transmembrane segments (helical) span residues 89 to 109 (LLISVLAVIVVFFTAWVCVNP), 119 to 139 (AFSVTIGITCPIVFIAIFCFF), 152 to 172 (VTVIFLAQCVKVTAISLAQCV), 182 to 202 (CVKVTAVFLAKCVKVIAVGLY), 207 to 227 (DLVVTIWLAWVVICFILFGCV), 243 to 263 (CSISAALFFILLLVCIPIWTL), 267 to 287 (LFGLFQVLGVQSCVVIVTKGL), 297 to 317 (ATGYEIEASSLFVIGNFLFFY), and 331 to 351 (FIGNGIASFLGGLGNAFGGIG).

Belongs to the WTF family. In terms of assembly, homomer. Forms protein aggregates. The two isoforms can interact with each other and with themselves. High sequence similarity is required for their interaction.

Its subcellular location is the spore membrane. The protein resides in the vacuole membrane. It is found in the ascus epiplasm. The protein localises to the cytoplasm. It localises to the endoplasmic reticulum membrane. Functionally, promotes unequal transmission of alleles from the parental zygote to progeny spores by acting as poison/antidote system where the poison and antidote proteins are produced from the same locus; the poison component is trans-acting and targets all spores within an ascus whereas the antidote component is spore-specific, leading to poisoning of all progeny that do not inherit the allele. In terms of biological role, localizes isoform 2 to the vacuole thereby facilitating its degradation. In addition to suppressing isoform 2, also suppresses S.pombe strain FY29033 wtf18 isoform 2. Its function is as follows. Forms toxic aggregates that disrupt spore maturation. This chain is Meiotic driver wtf13, found in Schizosaccharomyces pombe (strain 972 / ATCC 24843) (Fission yeast).